The primary structure comprises 359 residues: Phospho-N-acetylmuramoyl-pentapeptide-transferase (359 aa).

Transmembrane regions (helical) follow at residues 3 to 23 (QIMI…PALI), 55 to 75 (VAIL…GLAF), 80 to 100 (ITAS…VGFL), 117 to 137 (TAKT…VLQF), 156 to 176 (IATV…VVSA), 187 to 207 (LDGL…LITF), 231 to 251 (LALI…WNAA), 255 to 275 (IFMG…LSVT), 280 to 300 (ILAV…VLQI), and 334 to 354 (FWLL…GEWL).

This sequence belongs to the glycosyltransferase 4 family. MraY subfamily. The cofactor is Mg(2+).

It is found in the cell membrane. The enzyme catalyses UDP-N-acetyl-alpha-D-muramoyl-L-alanyl-gamma-D-glutamyl-meso-2,6-diaminopimeloyl-D-alanyl-D-alanine + di-trans,octa-cis-undecaprenyl phosphate = di-trans,octa-cis-undecaprenyl diphospho-N-acetyl-alpha-D-muramoyl-L-alanyl-D-glutamyl-meso-2,6-diaminopimeloyl-D-alanyl-D-alanine + UMP. The protein operates within cell wall biogenesis; peptidoglycan biosynthesis. Catalyzes the initial step of the lipid cycle reactions in the biosynthesis of the cell wall peptidoglycan: transfers peptidoglycan precursor phospho-MurNAc-pentapeptide from UDP-MurNAc-pentapeptide onto the lipid carrier undecaprenyl phosphate, yielding undecaprenyl-pyrophosphoryl-MurNAc-pentapeptide, known as lipid I. This Mycobacterium ulcerans (strain Agy99) protein is Phospho-N-acetylmuramoyl-pentapeptide-transferase.